We begin with the raw amino-acid sequence, 4306 residues long: Cytoplasmic dynein 2 heavy chain 1 (4306 aa).

A stem region spans residues 1-1650; the sequence is MAGSLGDVRK…YVQMVDSELQ (1650 aa). ATP is bound at residue 145–152; that stretch reads LGIVLRKS. Residues 669–696 are a coiled coil; sequence KELEGYIQKLQNAAERLATENRRLRKWH. AAA regions lie at residues 1651–1875, 1941–2161, 2249–2505, and 2617–2862; these read YTYE…VLRG, SALK…KQND, LTAD…WVLG, and HYGR…ESCK. ATP contacts are provided by residues 1689–1696, 1979–1986, 2291–2298, and 2655–2662; these read GPAGTGKT, GPSGAGKS, GPEGCGKG, and GRSGVGRR. The tract at residues 2880 to 3168 is stalk; sequence AISSSKKKEL…AEVSKAQETI (289 aa). 3 coiled-coil regions span residues 2896–2981, 3108–3199, and 3407–3441; these read LQAG…KEVQ, LETE…LATL, and IQHE…SLLE. AAA regions lie at residues 3243–3472 and 3689–3904; these read LCTE…LIQD and MALF…VIDR.

The protein belongs to the dynein heavy chain family. In terms of assembly, the cytoplasmic dynein complex 2 is probably composed by a heavy chain DYNC2H1 homodimer and a number of DYNC2LI1 light intermediate chains. Detected in brain, lung, spleen and kidney (at protein level). Enriched in the ependymal layer lining the lateral ventricles (at protein level).

The protein localises to the cytoplasm. The protein resides in the cytoskeleton. Its subcellular location is the cilium axoneme. It localises to the cell membrane. May function as a motor for intraflagellar retrograde transport. Functions in cilia biogenesis. According to PubMed:8666668, it may play a role in transport between endoplasmic reticulum and Golgi or organization of the Golgi in cells. This Mus musculus (Mouse) protein is Cytoplasmic dynein 2 heavy chain 1 (Dync2h1).